Reading from the N-terminus, the 367-residue chain is Peptide chain release factor 2 (367 aa).

Gln254 bears the N5-methylglutamine mark.

It belongs to the prokaryotic/mitochondrial release factor family. Post-translationally, methylated by PrmC. Methylation increases the termination efficiency of RF2.

The protein resides in the cytoplasm. Functionally, peptide chain release factor 2 directs the termination of translation in response to the peptide chain termination codons UGA and UAA. The chain is Peptide chain release factor 2 from Leptospira borgpetersenii serovar Hardjo-bovis (strain JB197).